A 531-amino-acid chain; its full sequence is MGIQGFLQKLSGLLLLLCALPWAEGGKVLVFPMEGSHWLSIRDVVRELHARGHQAVVLAPEVTVHIKEEDFFTLQTYPVPYTKEEYRHHLLGHLQNFFETEFSLKLVLQTMAAVNNVSTFYVRSCRGLLHNTALIQSLNSSSFDVVLTDPFFPCGAVLAMYLRVPAVFFLQSMLCELEFEATNSPNPSSYIPRLLTLNSDHMSFLDRVKNMLYPVPWMYLCHVNYGSLARLASDLLQREVSVVEILRHASVWLLRKDFVFHYPRPFMPNMVFIGGINCANRKPLSQEFEAYVNASGEHGIVVFSLGSMVSEIPEKKAMEIAEALGRIPQTLLWRYTGTRPSNLAKNTILVKWLPQNDLLGHPKARAFITHSGSHGIYEGICNGVPMVMMPLFGDQMDNAKRMETRGAGVTLNVLEMTADDLENALKTVINNKSYKENIMRLSSLHKDRPIEPLDLAVFWVEYVMRHKGAPHLRPAAHDLTWYQYHSLDVIGFLLAIVLTVVFIVYKSCAYGCRKCFGGKGRVKKSHKSKTH.

The first 25 residues, 1 to 25 (MGIQGFLQKLSGLLLLLCALPWAEG), serve as a signal peptide directing secretion. 4 N-linked (GlcNAc...) asparagine glycosylation sites follow: N116, N139, N293, and N431. Residues 489–505 (VIGFLLAIVLTVVFIVY) form a helical membrane-spanning segment.

This sequence belongs to the UDP-glycosyltransferase family. As to quaternary structure, homodimers. Homooligomer. Interacts with UGT1A1, UGT1A4, UGT1A6, UGT1A7, UGT1A8, UGT1A9 and UGT1A10 to form heterodimers.

It is found in the endoplasmic reticulum membrane. The catalysed reaction is glucuronate acceptor + UDP-alpha-D-glucuronate = acceptor beta-D-glucuronoside + UDP + H(+). It catalyses the reaction 17beta-estradiol + UDP-alpha-D-glucuronate = 17beta-estradiol 3-O-(beta-D-glucuronate) + UDP + H(+). It carries out the reaction 17beta-estradiol + UDP-alpha-D-glucuronate = 17beta-estradiol 17-O-(beta-D-glucuronate) + UDP + H(+). The enzyme catalyses 17alpha-estradiol + UDP-alpha-D-glucuronate = 17alpha-estradiol 3-O-(beta-D-glucuronate) + UDP + H(+). The catalysed reaction is estrone + UDP-alpha-D-glucuronate = estrone 3-O-(beta-D-glucuronate) + UDP + H(+). It catalyses the reaction chenodeoxycholate + UDP-alpha-D-glucuronate = chenodeoxycholoyl-24-O-(beta-D-glucuronate) + UDP. It carries out the reaction deoxycholate + UDP-alpha-D-glucuronate = deoxycholoyl-24-O-(beta-D-glucuronate) + UDP. The enzyme catalyses lithocholate + UDP-alpha-D-glucuronate = lithocholoyl-24-O-(beta-D-glucuronate) + UDP. The catalysed reaction is hyodeoxycholate + UDP-alpha-D-glucuronate = hyodeoxycholoyl-24-O-(beta-D-glucuronate) + UDP. It catalyses the reaction hyocholate + UDP-alpha-D-glucuronate = hyocholoyl-24-O-(beta-D-glucuronate) + UDP. It carries out the reaction calcidiol + UDP-alpha-D-glucuronate = calcidiol 25-O-(beta-D-glucuronide) + UDP + H(+). The enzyme catalyses losartan + UDP-alpha-D-glucuronate = losartan-2-N-beta-D-glucuronide + UDP. The catalysed reaction is candesartan + UDP-alpha-D-glucuronate = candesartan-2-N-beta-D-glucuronide + UDP. It catalyses the reaction zolasartan + UDP-alpha-D-glucuronate = zolarsartan-2-N-beta-D-glucuronide + UDP. It carries out the reaction (E)-ferulate + UDP-alpha-D-glucuronate = (E)-4-O-(beta-D-glucuronosyl)-ferulate + UDP + H(+). The enzyme catalyses (E)-ferulate + UDP-alpha-D-glucuronate = (E)-ferulic acid beta-D-glucuronate ester + UDP. UDP-glucuronosyltransferase (UGT) that catalyzes phase II biotransformation reactions in which lipophilic substrates are conjugated with glucuronic acid to increase the metabolite's water solubility, thereby facilitating excretion into either the urine or bile. Essential for the elimination and detoxification of drugs, xenobiotics and endogenous compounds. Catalyzes the glucuronidation of endogenous estrogen hormones such as estradiol and estrone. Contributes to bile acid (BA) detoxification by catalyzing the glucuronidation of BA substrates, which are natural detergents for dietary lipids absorption. Involved in the glucuronidation of calcidiol, which is the major circulating form of vitamin D3, essential for the regulation of calcium and phosphate homeostasis. Involved in the glucuronidation of the phytochemical ferulic acid at the phenolic or the carboxylic acid group. Involved in the glucuronidation of the AGTR1 angiotensin receptor antagonists losartan, candesartan and zolarsartan, which can inhibit the effect of angiotensin II. This Rattus norvegicus (Rat) protein is UDP-glucuronosyltransferase 1A3.